The following is a 229-amino-acid chain: Potassium/proton antiporter CemA (229 aa).

Transmembrane regions (helical) follow at residues 6–26 (AFIPFLYFISIVFFPWWISLC), 107–127 (IFHFSTNLISFVILSSYSFWG), 152–172 (FLILLLTDLCIGFHSPHGWEL), and 189–209 (ILSGLVSTFPVILDTIFKYWI).

It belongs to the CemA family.

It localises to the plastid. Its subcellular location is the chloroplast inner membrane. It carries out the reaction K(+)(in) + H(+)(out) = K(+)(out) + H(+)(in). Contributes to K(+)/H(+) antiport activity by supporting proton efflux to control proton extrusion and homeostasis in chloroplasts in a light-dependent manner to modulate photosynthesis. Prevents excessive induction of non-photochemical quenching (NPQ) under continuous-light conditions. Indirectly promotes efficient inorganic carbon uptake into chloroplasts. This chain is Potassium/proton antiporter CemA, found in Aethionema grandiflorum (Persian stone-cress).